A 650-amino-acid polypeptide reads, in one-letter code: Flap endonuclease 1 (650 aa).

The tract at residues 1 to 106 is N-domain; the sequence is MGIKGLTKFI…SELEKRGEKR (106 aa). Asp34 is a Mg(2+) binding site. Residues Arg47 and Arg72 each coordinate DNA. Residues Asp88, Glu160, Glu162, Asp181, and Asp183 each contribute to the Mg(2+) site. Residues 124-266 form an I-domain region; sequence EIKKQSGRTV…KTAYNLIKEY (143 aa). Residue Glu160 participates in DNA binding. DNA is bound by residues Gly244 and Asp246. Asp246 contributes to the Mg(2+) binding site. The tract at residues 349–357 is interaction with PCNA; sequence TQRRLDNFF. Residues 371–592 are disordered; sequence ETKKEQTLPA…NSYNNIKNNN (222 aa). Basic and acidic residues-rich tracts occupy residues 413–469, 478–502, and 511–524; these read MKEE…KKSL, DSDK…EKIN, and DHSR…KDNI. Over residues 525 to 562 the composition is skewed to low complexity; sequence SDINNNNNNNNNNSSSNNNNISNNHFNSVSSNSTFNSS. Over residues 565-581 the composition is skewed to basic and acidic residues; sequence LKSEDTLKSNSPLKEDS. Residues 582-592 show a composition bias toward low complexity; that stretch reads PNSYNNIKNNN.

The protein belongs to the XPG/RAD2 endonuclease family. FEN1 subfamily. In terms of assembly, interacts with PCNA1 and PCNA2. Three molecules of FEN1 bind to one PCNA trimer with each molecule binding to one PCNA monomer. PCNA stimulates the nuclease activity without altering cleavage specificity. The cofactor is Mg(2+). In terms of processing, phosphorylated. Phosphorylation upon DNA damage induces relocalization to the nuclear plasma.

The protein localises to the nucleus. It localises to the nucleolus. The protein resides in the nucleoplasm. It is found in the mitochondrion. Inhibited by monovalent metal ions. Structure-specific nuclease with 5'-flap endonuclease and 5'-3' exonuclease activities involved in DNA replication and repair. During DNA replication, cleaves the 5'-overhanging flap structure that is generated by displacement synthesis when DNA polymerase encounters the 5'-end of a downstream Okazaki fragment. It enters the flap from the 5'-end and then tracks to cleave the flap base, leaving a nick for ligation. Also involved in the long patch base excision repair (LP-BER) pathway, by cleaving within the apurinic/apyrimidinic (AP) site-terminated flap. Acts as a genome stabilization factor that prevents flaps from equilibrating into structures that lead to duplications and deletions. Also possesses 5'-3' exonuclease activity on nicked or gapped double-stranded DNA, and exhibits RNase H activity. Also involved in replication and repair of rDNA and in repairing mitochondrial DNA. The polypeptide is Flap endonuclease 1 (Plasmodium falciparum).